The chain runs to 600 residues: Elongation factor 4 (600 aa).

Positions lysine 5–lysine 187 constitute a tr-type G domain. Residues aspartate 17–threonine 22 and asparagine 134–aspartate 137 contribute to the GTP site.

It belongs to the TRAFAC class translation factor GTPase superfamily. Classic translation factor GTPase family. LepA subfamily.

The protein localises to the cell inner membrane. The catalysed reaction is GTP + H2O = GDP + phosphate + H(+). Functionally, required for accurate and efficient protein synthesis under certain stress conditions. May act as a fidelity factor of the translation reaction, by catalyzing a one-codon backward translocation of tRNAs on improperly translocated ribosomes. Back-translocation proceeds from a post-translocation (POST) complex to a pre-translocation (PRE) complex, thus giving elongation factor G a second chance to translocate the tRNAs correctly. Binds to ribosomes in a GTP-dependent manner. The sequence is that of Elongation factor 4 from Rickettsia bellii (strain OSU 85-389).